A 264-amino-acid polypeptide reads, in one-letter code: Thymidylate synthase (264 aa).

DUMP is bound at residue R21. H51 is a binding site for (6R)-5,10-methylene-5,6,7,8-tetrahydrofolate. 126–127 is a binding site for dUMP; the sequence is RR. The active-site Nucleophile is the C146. DUMP-binding positions include 166 to 169, N177, and 207 to 209; these read RSGD and HLY. Residue D169 coordinates (6R)-5,10-methylene-5,6,7,8-tetrahydrofolate. A263 lines the (6R)-5,10-methylene-5,6,7,8-tetrahydrofolate pocket.

The protein belongs to the thymidylate synthase family. Bacterial-type ThyA subfamily. In terms of assembly, homodimer.

It localises to the cytoplasm. It carries out the reaction dUMP + (6R)-5,10-methylene-5,6,7,8-tetrahydrofolate = 7,8-dihydrofolate + dTMP. It participates in pyrimidine metabolism; dTTP biosynthesis. Catalyzes the reductive methylation of 2'-deoxyuridine-5'-monophosphate (dUMP) to 2'-deoxythymidine-5'-monophosphate (dTMP) while utilizing 5,10-methylenetetrahydrofolate (mTHF) as the methyl donor and reductant in the reaction, yielding dihydrofolate (DHF) as a by-product. This enzymatic reaction provides an intracellular de novo source of dTMP, an essential precursor for DNA biosynthesis. The protein is Thymidylate synthase of Brevibacillus brevis (strain 47 / JCM 6285 / NBRC 100599).